A 510-amino-acid polypeptide reads, in one-letter code: Hydroperoxide bicyclase CYP5164A3, mitochondrial (510 aa).

The N-terminal 31 residues, M1 to R31, are a transit peptide targeting the mitochondrion. Residue C452 participates in heme binding.

Belongs to the cytochrome P450 family. It depends on heme as a cofactor.

The protein resides in the mitochondrion. The catalysed reaction is (13S)-hydroperoxy-(9Z,11E,15Z)-octadecatrienoate = plasmodiophorol A. It catalyses the reaction (13S)-hydroperoxy-(9Z,11E,15Z)-octadecatrienoate = plasmodiophorol B. It carries out the reaction (13S)-hydroperoxy-(9Z,11E,15Z)-octadecatrienoate = ectocarpin A + H2O. The enzyme catalyses (15S)-hydroperoxy-(5Z,8Z,11Z,13E,17Z)-eicosapentaenoate = ectocarpin B + H2O. The catalysed reaction is (15S)-hydroperoxy-(5Z,8Z,11Z,13E,17Z)-eicosapentaenoate = ectocarpin C. It catalyses the reaction (15S)-hydroperoxy-(5Z,8Z,11Z,13E,17Z)-eicosapentaenoate + H2O = ectocarpin D. It carries out the reaction (15S)-hydroperoxy-(5Z,8Z,11Z,13E,17Z)-eicosapentaenoate = 14-oxo-15-hydroxy-(5Z,8Z,11Z,17Z)-eicosatetraenoate. Its pathway is lipid metabolism; oxylipin biosynthesis. Its function is as follows. Cytochrome P450 hydroperoxide bicyclase involved in the metabolism of oxylipins 'ectocarpins' natural products, such as hybridalactone, ecklonilactones and derivatives. Isomerizes the hydroperoxides into epoxyalcohols via epoxyallylic radical. Can use alpha-linolenic acid 13(S)-hydroperoxide (13-HPOTE) and eicosapentaenoic acid 15(S)-hydroperoxide (15-HPEPE) as preferred substrate to produce corresponding heterobicyclic oxylipins, such as plasmodiophorol A (6-oxabicyclo[3.1.0]hexane), plasmodiophorol B (2-oxabicyclo[2.2.1]heptane) and plasmodiophorol C (4-hydroxymethyl-1,2-dihydroxycyclopentane) as well as ectocarpin A (3-propenyl-6-oxabicyclo[3.1.0]hexane) formed at about 15:3:3:1 ratio for 13-HPOTE, and analogous to plasmodiophorols A and B including ectocarpin B (3-[(1'E)-propenyl]-6-oxabicyclo[3.1.0]hexane), ectocarpin C, 14-oxo-15-hydroxy-5,8,11,17-eicosate-traenoic acid and ectocarpin D for 15-HPEPE. Barely able to use linoleic acid 13-hydroperoxide (13-HPODE), linoleic acid 9-hydroperoxide (9-HPODE), eicosapentaenoic acid 15-hydroperoxide (15-HPEPE), and alpha-linolenic acid 9-hydroperoxide (9-HPOTE) as substrates. In Ectocarpus siliculosus (Brown alga), this protein is Hydroperoxide bicyclase CYP5164A3, mitochondrial.